Here is a 1083-residue protein sequence, read N- to C-terminus: MSDYFTFPKQENGGISKQPATPGSTRSSSRNLELPKNYRSFGGSSDELASMYSADSQYLMDMIPDSLTLKNEPASGNTQMNGPDGKENKDIKLDEYILPKTDPRSPYYINMPIPKKLPKSEGKARAKQKVNRADPSDLDVENIYETSGEFVREYPTDILIDRFHKWKKILKSLIAYFREAAYSQEQIARINYQMKNAVKFAFLTDLEDETNKLVDPSISKLPTKKPQPVPLAAQKLDSKYDTDVEQPQSIQSVPSEEVASASSGFMKFGSGSIQDIQVILKKYHLSLGSQQYKISKEILAYIIPKLTDLRKDLTTKMKEIKELNGDFKTNIGEHIKITSRLLNKYIASVKLLDEASTSGDKQGEKLKPKHDPYLLKLQLDLQLKRQLLEENYLREAFLNLQSAALQLEKIVYSKIQSALQRYSALIDSEARLMIKNLCHELQQGILSRPPAVEWDNFVSHHPTCLMNLKSTDPPPQPRRLSDIVYPNMKSPLAKCIRVGYLLKKTESSKSFTKGYFVLTTNYLHEFKSSDFFLDSKSPRSKNKPVVEQSDISRVNKDGTNAGSHPSSKGTQDPKLTKRRKGLSSSNLYPISSLSLNDCSLKDSTDSTFVLQGYASYHSPEDTCTKESSTTSDLACPTKTLASNKGKHQRTPSALSMVSVPKFLKSSSVPKEQKKAKEEANINKKSICEKRVEWTFKIFSASLEPTPEESKNFKKWVQDIKALTSFNSTQERSNFIEEKILKSRNHNNGKSSQRSKNSTYITPVDSFVNLSEKVTPSSSVTTLNTRKRANRPRYIDIPKSANMNAGAMNSVYRSKVNTPAIDENGNLAIVGETKNSAPQNGMSYTIRTPCKSPYSPYTGEGMLYNRSADNLMASSSRKASAPGEVPQIAVSNHGDEAIIPASAYSDSSHKSSRASSVASIHNQRVDFYPSPLMNLPGVSPSCLALDGNANGYFGIPLNCNSEARRGSDLSPFEMESPLFEENRTQNCSGSRKSSACHIPHQCGPRKEGNDSRLIYGNEKGASQSRLTLKEPLTSKGVEAPYSSLKKTYSAENVPLTSTVSNDKSLHSRKEGSTNTVPATSASSK.

Disordered regions lie at residues 1-46 and 69-89; these read MSDY…GSSD and LKNE…KENK. The segment covering 13-31 has biased composition (polar residues); the sequence is GGISKQPATPGSTRSSSRN. Phosphoserine occurs at positions 136, 249, 252, 481, and 537. Residues 495–606 enclose the PH domain; that stretch reads CIRVGYLLKK…DCSLKDSTDS (112 aa). The tract at residues 534 to 582 is disordered; that stretch reads DSKSPRSKNKPVVEQSDISRVNKDGTNAGSHPSSKGTQDPKLTKRRKGL. The segment covering 549 to 570 has biased composition (polar residues); that stretch reads SDISRVNKDGTNAGSHPSSKGT. Residues Ser652, Ser765, and Ser813 each carry the phosphoserine modification. Residues Thr817 and Thr857 each carry the phosphothreonine modification. Phosphoserine is present on residues Ser866, Ser879, Ser918, Ser966, Ser969, and Ser975. Residues 979–1083 form a disordered region; sequence EENRTQNCSG…TVPATSASSK (105 aa). Composition is skewed to polar residues over residues 983–992, 1043–1061, and 1071–1083; these read TQNCSGSRKS, LKKT…VSND, and STNT…ASSK. Ser1059, Ser1081, and Ser1082 each carry phosphoserine.

This sequence belongs to the RGC1 family.

Its subcellular location is the cytoplasm. Functionally, positive regulator of FPS1 glycerol channel required for the glycerol efflux. The chain is Regulator of the glycerol channel 1 (RGC1) from Saccharomyces cerevisiae (strain ATCC 204508 / S288c) (Baker's yeast).